We begin with the raw amino-acid sequence, 440 residues long: Aspartokinase (440 aa).

This sequence belongs to the aspartokinase family.

It catalyses the reaction L-aspartate + ATP = 4-phospho-L-aspartate + ADP. It participates in amino-acid biosynthesis; L-lysine biosynthesis via DAP pathway; (S)-tetrahydrodipicolinate from L-aspartate: step 1/4. It functions in the pathway amino-acid biosynthesis; L-methionine biosynthesis via de novo pathway; L-homoserine from L-aspartate: step 1/3. The protein operates within amino-acid biosynthesis; L-threonine biosynthesis; L-threonine from L-aspartate: step 1/5. The sequence is that of Aspartokinase (lysC) from Chlamydia pneumoniae (Chlamydophila pneumoniae).